The following is a 318-amino-acid chain: Vomeronasal type-1 receptor 45 (318 aa).

At 1–32 (MSEILFFSPQPLFSHMMNKNSRLHTHSNIKNT) the chain is on the extracellular side. Residues 33–53 (FFSEIGIGILGNSFLLLFHIL) form a helical membrane-spanning segment. Over 54–65 (KFIRGHRLRLTD) the chain is Cytoplasmic. The helical transmembrane segment at 66 to 86 (LPIGLLSLIHLLMLLLMAFIA) threads the bilayer. The Extracellular portion of the chain corresponds to 87–109 (TDIFISRRGWDDIICKFLVYLYR). Residues cysteine 101 and cysteine 188 are joined by a disulfide bond. A helical membrane pass occupies residues 110-130 (VLRGLSLCTTSMLSVLQAIIL). Residues 131–150 (SPRSSCLAKLKHKYPHHISC) lie on the Cytoplasmic side of the membrane. A helical membrane pass occupies residues 151 to 171 (AIIFLSVLYMLISSHILLSII). Over 172-206 (ATPNLTRNDFLYVTQSCSILPLSYVMQSMYSTLLA) the chain is Extracellular. Asparagine 175 carries N-linked (GlcNAc...) asparagine glycosylation. A helical membrane pass occupies residues 207 to 227 (LREVFLISLMVLSTLYMVVLL). Residues 228 to 254 (CRHRKQAQHLQGTSLSPKASAEQRATQ) lie on the Cytoplasmic side of the membrane. A helical membrane pass occupies residues 255-275 (TILMLMTFFVLMSIFDSIVSC). Over 276–285 (SRTMFLDDPT) the chain is Extracellular. Residues 286–306 (SYSIHIFVMHIYATVSPFVFM) traverse the membrane as a helical segment. Residues 307-318 (STEKHIVNILRG) lie on the Cytoplasmic side of the membrane.

The protein belongs to the G-protein coupled receptor 1 family. In terms of tissue distribution, expressed in a subset of sensory neurons located in the apical layer of the vomeronasal organ.

It is found in the cell membrane. In terms of biological role, putative pheromone receptor implicated in the regulation of social and reproductive behavior. The chain is Vomeronasal type-1 receptor 45 (Vmn1r45) from Mus musculus (Mouse).